The chain runs to 24 residues: Pandinin-2 (24 aa).

In terms of assembly, homooligomer. Expressed by the venom gland.

It is found in the secreted. It localises to the target cell membrane. Functionally, disrupts cell membranes through formation of pores. Has strong antimicrobial activity against Gram-positive bacteria B.subtilis, S.epidermidis, E.faecalis and S.aureus. Is less active against Gram-negative bacteria P.aeruginosa and E.coli. Also increases efficacy of antibiotics (ampicillin, chloramphenicol, streptomycin, kanamycin, novobiocin) when tested against E.coli, probably by facilitating their incorporation into the bacteria. Possesses antifungal activity against C.albicans and hemolytic activity against human, sheep and pig erythrocytes. The chain is Pandinin-2 from Pandinus imperator (Emperor scorpion).